The primary structure comprises 210 residues: Protein-methionine-sulfoxide reductase heme-binding subunit MsrQ (210 aa).

Transmembrane regions (helical) follow at residues 8-28 (LAVFLAACIAPVWWLYQAWIF), 37-57 (VLVENFGVATLVMLLITLSMT), 75-95 (LGLWCFAYALLHLSMYALFIL), 110-130 (PYIIVGALALLGLLALAVTSN), 147-167 (IIYVILGLGLLHMFWIVRADL), and 169-189 (EWALYAGIGAFLLLLRIPVFA).

Belongs to the MsrQ family. As to quaternary structure, heterodimer of a catalytic subunit (MsrP) and a heme-binding subunit (MsrQ). FMN is required as a cofactor. The cofactor is heme b.

Its subcellular location is the cell inner membrane. In terms of biological role, part of the MsrPQ system that repairs oxidized periplasmic proteins containing methionine sulfoxide residues (Met-O), using respiratory chain electrons. Thus protects these proteins from oxidative-stress damage caused by reactive species of oxygen and chlorine generated by the host defense mechanisms. MsrPQ is essential for the maintenance of envelope integrity under bleach stress, rescuing a wide series of structurally unrelated periplasmic proteins from methionine oxidation. MsrQ provides electrons for reduction to the reductase catalytic subunit MsrP, using the quinone pool of the respiratory chain. This chain is Protein-methionine-sulfoxide reductase heme-binding subunit MsrQ, found in Pseudomonas syringae pv. syringae (strain B728a).